Reading from the N-terminus, the 296-residue chain is Small ribosomal subunit biogenesis GTPase RsgA (296 aa).

Positions 65–223 (INRIGRPAVA…LADTPGFSSI (159 aa)) constitute a CP-type G domain. Residues 114-117 (SKAD) and 166-174 (GQSGAGKST) each bind GTP. The Zn(2+) site is built by C247, C252, H254, and C260.

It belongs to the TRAFAC class YlqF/YawG GTPase family. RsgA subfamily. In terms of assembly, monomer. Associates with 30S ribosomal subunit, binds 16S rRNA. The cofactor is Zn(2+).

It is found in the cytoplasm. In terms of biological role, one of several proteins that assist in the late maturation steps of the functional core of the 30S ribosomal subunit. Helps release RbfA from mature subunits. May play a role in the assembly of ribosomal proteins into the subunit. Circularly permuted GTPase that catalyzes slow GTP hydrolysis, GTPase activity is stimulated by the 30S ribosomal subunit. The polypeptide is Small ribosomal subunit biogenesis GTPase RsgA (Lactobacillus acidophilus (strain ATCC 700396 / NCK56 / N2 / NCFM)).